We begin with the raw amino-acid sequence, 305 residues long: Auxin-responsive protein IAA27 (305 aa).

The EAR-like (transcriptional repression) motif lies at 45–49 (LRLGL). 2 disordered regions span residues 96-119 (TTAT…GKST) and 155-180 (KNSM…AKSG). Over residues 155–170 (KNSMASSQSQKPGNNS) the composition is skewed to polar residues. In terms of domain architecture, PB1 spans 185 to 287 (CLYVKVSMEG…SCKKLRIMKS (103 aa)).

It belongs to the Aux/IAA family. Homodimers and heterodimers. Interacts with phytochrome A. Interacts with TPL.

It localises to the nucleus. In terms of biological role, aux/IAA proteins are short-lived transcriptional factors that function as repressors of early auxin response genes at low auxin concentrations. Repression is thought to result from the interaction with auxin response factors (ARFs), proteins that bind to the auxin-responsive promoter element (AuxRE). Formation of heterodimers with ARF proteins may alter their ability to modulate early auxin response genes expression. The protein is Auxin-responsive protein IAA27 (IAA27) of Arabidopsis thaliana (Mouse-ear cress).